Consider the following 203-residue polypeptide: Small ribosomal subunit protein uS4 (203 aa).

The region spanning 93–156 (TRLDNLVFRL…QNLAIVNEAI (64 aa)) is the S4 RNA-binding domain.

The protein belongs to the universal ribosomal protein uS4 family. As to quaternary structure, part of the 30S ribosomal subunit. Contacts protein S5. The interaction surface between S4 and S5 is involved in control of translational fidelity.

In terms of biological role, one of the primary rRNA binding proteins, it binds directly to 16S rRNA where it nucleates assembly of the body of the 30S subunit. Functionally, with S5 and S12 plays an important role in translational accuracy. This Lacticaseibacillus casei (strain BL23) (Lactobacillus casei) protein is Small ribosomal subunit protein uS4.